Reading from the N-terminus, the 471-residue chain is MASKSQHNAPKVKSPNGKAGSQGQWGRAWEVDWFSLASIIFLLLFAPFIVYYFIMACDQYSCSLTAPALDIATGHASLADIWAKTPPVTAKAAQLYALWVSFQVLLYSWLPDFCHRFLPGYVGGVQEGAITPAGVVNKYEVNGLQAWLITHILWFVNAYLLSWFSPTIIFDNWIPLLWCANILGYAVSTFAMIKGYLFPTSAEDCKFTGNFFYNYMMGIEFNPRIGKWFDFKLFFNGRPGIVAWTLINLSFAAKQQELYGHVTNSMILVNVLQAIYVLDFFWNETWYLKTIDICHDHFGWYLGWGDCVWLPYLYTLQGLYLVYHPVQLSTPNALGILLLGLVGYYIFRMTNHQKDLFRRTDGRCLIWGKKPKAIECSYTSADGLKHHSKLLVSGFWGVARHFNYTGDLMGSLAYCLACGGGHLLPYFYIIYMTILLTHRCLRDEHRCANKYGRDWERYTAAVPYRLLPGIF.

A disordered region spans residues 1 to 23 (MASKSQHNAPKVKSPNGKAGSQG). Phosphoserine is present on S14. Transmembrane regions (helical) follow at residues 36–56 (LASI…FIMA), 95–115 (LYAL…DFCH), 144–164 (LQAW…LSWF), 173–193 (WIPL…FAMI), 233–253 (LFFN…SFAA), 262–282 (VTNS…DFFW), 302–322 (LGWG…LYLV), and 327–347 (QLST…YYIF). NADP(+) is bound by residues K354, R358, L391, W396, and 403–404 (NY). The helical transmembrane segment at 416 to 436 (LACGGGHLLPYFYIIYMTILL) threads the bilayer. NADP(+) is bound by residues D443, 447–451 (CANKY), and Y458.

This sequence belongs to the ERG4/ERG24 family. As to quaternary structure, interacts with DHCR24; this interaction regulates DHCR7 activity. Interacts with TMEM147.

It localises to the endoplasmic reticulum membrane. The enzyme catalyses cholesterol + NADP(+) = 7-dehydrocholesterol + NADPH + H(+). The catalysed reaction is 7-dehydrodesmosterol + NADPH + H(+) = desmosterol + NADP(+). It catalyses the reaction 5,6alpha-epoxy-5alpha-cholestan-3beta-ol + H2O = 5alpha-cholestane-3beta,5,6beta-triol. It carries out the reaction 5,6beta-epoxy-5beta-cholestan-3beta-ol + H2O = 5alpha-cholestane-3beta,5,6beta-triol. The protein operates within steroid biosynthesis; cholesterol biosynthesis. Functionally, oxidoreductase that catalyzes the last step of the cholesterol synthesis pathway, which transforms cholesta-5,7-dien-3beta-ol (7-dehydrocholesterol,7-DHC) into cholesterol by reducing the C7-C8 double bond of its sterol core. Can also metabolize cholesta-5,7,24-trien-3beta-ol (7-dehydrodemosterol, 7-DHD) to desmosterol, which is then metabolized by the Delta(24)-sterol reductase (DHCR24) to cholesterol. Modulates ferroptosis (a form of regulated cell death driven by iron-dependent lipid peroxidation) through the metabolic breakdown of the anti-ferroptotic metabolites 7-DHC and 7-DHD which, when accumulated, divert the propagation of peroxyl radical-mediated damage from phospholipid components to its sterol core, protecting plasma and mitochondrial membranes from phospholipid autoxidation. Component of the microsomal antiestrogen binding site (AEBS), a multiproteic complex at the ER membrane that consists of an association between cholestenol Delta-isomerase/EBP and DHCR7. This complex is responsible for cholesterol-5,6-epoxide hydrolase (ChEH) activity, which consists in the hydration of cholesterol-5,6-epoxides (5,6-EC) into cholestane-3beta,5alpha,6beta-triol (CT). The precise role of each component of this complex has not been described yet. In Mus musculus (Mouse), this protein is 7-dehydrocholesterol reductase (Dhcr7).